The chain runs to 214 residues: Osteoclast-stimulating factor 1 (214 aa).

Position 2 is an N-acetylserine (S2). The 60-residue stretch at 12 to 71 (GQVKVFRALYTFEPRTPDELYFEEGDIIYITDMSDTSWWKGTCKGRTGLIPSNYVAEQAE) folds into the SH3 domain. 3 ANK repeats span residues 72-101 (SIDN…GVNG), 105-135 (AGST…ELNQ), and 139-168 (LGDT…RTDL). Phosphothreonine is present on T200. 2 positions are modified to phosphoserine: S202 and S213.

In terms of assembly, interacts with SRC and SMN1. Interacts with FASLG.

The protein localises to the cytoplasm. Induces bone resorption, acting probably through a signaling cascade which results in the secretion of factor(s) enhancing osteoclast formation and activity. This Rattus norvegicus (Rat) protein is Osteoclast-stimulating factor 1 (Ostf1).